The primary structure comprises 1610 residues: Voltage-dependent L-type calcium channel subunit alpha-1D (1610 aa).

A disordered region spans residues 1-99; the sequence is MMMMMMKKMQ…SKKQGNSSNS (99 aa). At 1-125 the chain is on the cytoplasmic side; the sequence is MMMMMMKKMQ…RACISIVEWK (125 aa). Residues 37–51 show a composition bias toward polar residues; sequence GPTSQPNSSKQTVLS. Positions 53 to 66 are enriched in low complexity; that stretch reads QAAIDAARQAKAAQ. The span at 81–92 shows a compositional bias: basic residues; the sequence is QRKRQQYAKSKK. The stretch at 112 to 408 is one I repeat; that stretch reads NPIRRACISI…LVLGVLSGEF (297 aa). The helical transmembrane segment at 126–144 threads the bilayer; sequence PFDIFILLAIFANCVALAI. At 145 to 162 the chain is on the extracellular side; that stretch reads YIPFPEDDSNSTNHNLEK. N-linked (GlcNAc...) asparagine glycosylation occurs at Asn-154. A helical transmembrane segment spans residues 163-182; it reads VEYAFLIIFTVETFLKIIAY. The Cytoplasmic portion of the chain corresponds to 183–194; that stretch reads GLLLHPNAYVRN. The chain crosses the membrane as a helical span at residues 195–213; that stretch reads GWNLLDFVIVIVGLFSVIL. The Extracellular portion of the chain corresponds to 214-234; sequence EQLTKETEGGNHSSGKSGGFD. N-linked (GlcNAc...) asparagine glycosylation occurs at Asn-224. The helical transmembrane segment at 235–253 threads the bilayer; it reads VKALRAFRVLRPLRLVSGV. Topologically, residues 254–272 are cytoplasmic; that stretch reads PSLQVVLNSIIKAMVPLLH. A helical membrane pass occupies residues 273–292; sequence IALLVLFVIIIYAIIGLELF. Topologically, residues 293-380 are extracellular; that stretch reads IGKMHKTCFF…WMNDAMGFEL (88 aa). N-linked (GlcNAc...) asparagine glycosylation is present at Asn-328. Position 363 (Glu-363) interacts with Ca(2+). Residues 381–405 traverse the membrane as a helical segment; the sequence is PWVYFVSLVIFGSFFVLNLVLGVLS. At 406 to 522 the chain is on the cytoplasmic side; it reads GEFSKEREKA…RRCRAAVKSV (117 aa). Residues 428–445 are binding to the beta subunit; sequence EQLEEDLKGYLDWITQAE. The interval 448-487 is disordered; the sequence is DPENEEEGGEEGKRNTSMPTSETESVNTENVSGEGETQGS. The span at 462 to 487 shows a compositional bias: polar residues; sequence NTSMPTSETESVNTENVSGEGETQGS. An II repeat occupies 508 to 754; the sequence is NRFNRRRCRA…VFLAIAVDNL (247 aa). The helical transmembrane segment at 523–542 threads the bilayer; that stretch reads TFYWLVIVLVFLNTLTISSE. At 543–557 the chain is on the extracellular side; that stretch reads HYNQPDWLTQIQDIA. Residues 558 to 576 form a helical membrane-spanning segment; that stretch reads NKVLLALFTCEMLVKMYSL. At 577-584 the chain is on the cytoplasmic side; that stretch reads GLQAYFVS. Residues 585–603 form a helical membrane-spanning segment; that stretch reads LFNRFDCFVVCGGITETIL. Residues 604 to 613 lie on the Extracellular side of the membrane; the sequence is VELELMSPLG. Residues 614-632 form a helical membrane-spanning segment; that stretch reads VSVFRCVRLLRIFKVTRHW. At 633 to 651 the chain is on the cytoplasmic side; sequence TSLSNLVASLLNSMKSIAS. The chain crosses the membrane as a helical span at residues 652-672; that stretch reads LLLLLFLFIIIFSLLGMQLFG. Residues 673–726 lie on the Extracellular side of the membrane; it reads GKFNFDETQTKRSTFDNFPQALLTVFQILTGEDWNAVMYDGIMAYGGPSSSGMI. Glu-704 serves as a coordination point for Ca(2+). A helical transmembrane segment spans residues 727 to 751; it reads VCIYFIILFICGNYILLNVFLAIAV. Residues 752 to 884 are Cytoplasmic-facing; it reads DNLADAESLN…VGCHKLINHH (133 aa). A compositionally biased stretch (basic and acidic residues) spans 765-789; the sequence is KEEAEEKERKKIARKESLENKKNNK. Residues 765–846 are disordered; it reads KEEAEEKERK…VPAGPRPRRI (82 aa). The span at 790 to 801 shows a compositional bias: polar residues; the sequence is PEVNQIANSDNK. Residues 824–836 are compositionally biased toward acidic residues; that stretch reads VGEEEEEEEEEPE. The stretch at 871–1153 is one III repeat; sequence NPIRVGCHKL…IFVGFVIVTF (283 aa). A helical membrane pass occupies residues 885–903; that stretch reads IFTNLILVFIMLSSAALAA. Topologically, residues 904-919 are extracellular; that stretch reads EDPIRSHSFRNTILGY. The helical transmembrane segment at 920-939 threads the bilayer; that stretch reads FDYAFTAIFTVEILLKMTTF. Residues 940-951 lie on the Cytoplasmic side of the membrane; the sequence is GAFLHKGAFCRN. The chain crosses the membrane as a helical span at residues 952-970; sequence YFNLLDMLVVGVSLVSFGI. Residues 971 to 976 are Extracellular-facing; sequence QSSAIS. The chain crosses the membrane as a helical span at residues 977–996; the sequence is VVKILRVLRVLRPLRAINRA. The Cytoplasmic portion of the chain corresponds to 997-1015; the sequence is KGLKHVVQCVFVAIRTIGN. The helical transmembrane segment at 1016-1035 threads the bilayer; the sequence is IMIVTTLLQFMFACIGVQLF. The Extracellular segment spans residues 1036–1125; sequence KGKFYRCTDE…AGPVYNHRVE (90 aa). Residues 1073-1163 are dihydropyridine binding; sequence RIWQNSDFNF…QEQGEKEYKN (91 aa). Ca(2+) is bound at residue Glu-1099. A helical transmembrane segment spans residues 1126–1146; the sequence is ISIFFIIYIIIVAFFMMNIFV. Over 1147–1203 the chain is Cytoplasmic; that stretch reads GFVIVTFQEQGEKEYKNCELDKNQRQCVEYALKARPLRRYIPKNPYQYKFWYVVNSS. An IV repeat occupies 1190 to 1465; sequence NPYQYKFWYV…LFVAVIMDNF (276 aa). A helical transmembrane segment spans residues 1204-1222; sequence PFEYMMFVLIMLNTLCLAM. Over 1223–1237 the chain is Extracellular; that stretch reads QHYEQSKMFNDAMDI. The helical transmembrane segment at 1238 to 1257 threads the bilayer; the sequence is LNMVFTGVFTVEMVLKVIAF. Residues 1258 to 1264 are Cytoplasmic-facing; that stretch reads KPKGYFS. The chain crosses the membrane as a helical span at residues 1265 to 1286; sequence DAWNTFDSLIVIGSIIDVALSE. Over 1287 to 1311 the chain is Extracellular; the sequence is ADPTESESLPLPTATPGNSEESNRI. A helical membrane pass occupies residues 1312–1331; the sequence is SITFFRLFRVMRLVKLLSRG. At 1332-1350 the chain is on the cytoplasmic side; sequence EGIRTLLWTFIKSFQALPY. The chain crosses the membrane as a helical span at residues 1351 to 1370; the sequence is VALLIAMLFFIYAVIGMQMF. Topologically, residues 1371-1437 are extracellular; it reads GKVAMRDNNQ…GEEYTCGSNF (67 aa). Positions 1418–1484 are dihydropyridine binding; sequence LCDPDSDYNP…LGPHHLDEFK (67 aa). Residues 1430-1473 are phenylalkylamine binding; it reads EYTCGSNFAIVYFISFYMLCAFLIINLFVAVIMDNFDYLTRDWS. Residues 1438–1462 traverse the membrane as a helical segment; it reads AIVYFISFYMLCAFLIINLFVAVIM. At 1463–1610 the chain is on the cytoplasmic side; sequence DNFDYLTRDW…CFLSPSRSRS (148 aa).

It belongs to the calcium channel alpha-1 subunit (TC 1.A.1.11) family. CACNA1D subfamily. Voltage-dependent calcium channels are multisubunit complexes, consisting of alpha-1, alpha-2, beta and delta subunits in a 1:1:1:1 ratio. The channel activity is directed by the pore-forming and voltage-sensitive alpha-1 subunit. In many cases, this subunit is sufficient to generate voltage-sensitive calcium channel activity. The auxiliary subunits beta and alpha-2/delta linked by a disulfide bridge regulate the channel activity. Interacts with RIMBP2. Interacts with CABP1 and CABP4, resulting in a near elimination of calcium-dependent inactivation of the channel. In terms of tissue distribution, expressed in brain, heart and skeletal muscle.

It is found in the membrane. It catalyses the reaction Ca(2+)(in) = Ca(2+)(out). Voltage-sensitive calcium channels (VSCC) mediate the entry of calcium ions into excitable cells and are also involved in a variety of calcium-dependent processes, including muscle contraction, hormone or neurotransmitter release, gene expression, cell motility, cell division and cell death. The isoform alpha-1D gives rise to L-type calcium currents. Long-lasting (L-type) calcium channels belong to the 'high-voltage activated' (HVA) group. They are blocked by dihydropyridines (DHP), phenylalkylamines, and by benzothiazepines. The protein is Voltage-dependent L-type calcium channel subunit alpha-1D (CACNA1D) of Mesocricetus auratus (Golden hamster).